Here is a 454-residue protein sequence, read N- to C-terminus: NADP-specific glutamate dehydrogenase (454 aa).

The residue at position 2 (serine 2) is an N-acetylserine. The active site involves lysine 114.

The protein belongs to the Glu/Leu/Phe/Val dehydrogenases family. As to quaternary structure, homohexamer.

It catalyses the reaction L-glutamate + NADP(+) + H2O = 2-oxoglutarate + NH4(+) + NADPH + H(+). The chain is NADP-specific glutamate dehydrogenase (gdh) from Neurospora crassa (strain ATCC 24698 / 74-OR23-1A / CBS 708.71 / DSM 1257 / FGSC 987).